The chain runs to 1007 residues: Zinc finger CCCH domain-containing protein 4 (1007 aa).

One can recognise a Helicase ATP-binding domain in the interval 28-192 (VEKVKGNRVT…FRDLGRGERV (165 aa)). Residue 41-48 (GDTGCGKS) coordinates ATP. A DEAH box motif is present at residues 139–142 (DEIH). The Helicase C-terminal domain maps to 250–420 (LIHRLLLHIH…EQVLMICCAE (171 aa)). C3H1-type zinc fingers lie at residues 723–750 (ALEN…HSSR) and 751–778 (APRP…HDSG).

The sequence is that of Zinc finger CCCH domain-containing protein 4 from Oryza sativa subsp. japonica (Rice).